The sequence spans 907 residues: MLLLTILPASLMAAMLGGYFTWMQLSELQSQLLQRGEMIAQDLAPLAANALGRKDKVLLSRIATQTLEQTDVRAVSFLDTDRTVLAHAGPTMISPSPIGSGSQLLSSTGTDATRYLLPVFGSQRHLTSPIIPAEADTLLGWVELEISHNGTLLRGYRSLFASLLLILTGLAFTATLAVRMSRTINGPMSQIKQAVSQLKDGNLETRLPPLGSRELDELASGINRMAATLQNAQEELQLSIDQATEDVRQNLETIEIQNIELDLARKEALEASRIKSEFLANMSHEIRTPLNGILGFTHLLQKSELTPRQFDYLGTIEKSADNLLSIINEILDFSKIEAGKLVLDNIPFNLRDLLQDTLTILAPAAHAKQLELVSLVYRDTPLALSGDPLRLRQILTNLVSNAIKFTREGTIVARAMLEDETEEHAQLRISVQDTGIGLSSQDVRALFQAFSQADNSLSRQPGGTGLGLVISKRLIEQMGGEIGVDSTPGEGSEFWISLKLPKAREDKEESLNIPLGGLRAAVLEHHDLARQALEHQLEDCGLQTIVFNNLENLLNGVTAAHETPAAIDLAVLGVTALEISPERLRQHIWDLENLNCKVMVLCPTTEHALFQLAVHDVYTQLQAKPACTRKLQKALSELIAPRAVRADIGPPLSSRAPRVLCVDDNPANLLLVQTLLEDMGAEVVAVEGGYAAVNAVQQEAFDLVLMDVQMPGMDGRQATEAIRAWEAERNQSSLPIVALTAHAMANEKRSLLQSGMDDYLTKPISERQLAQVVLKWTGLALRNPAPERQNEALEVHVGPLVLDHEEGLRLAAGKADLAADMLAMLLASLDADREAIRVARANQDVHALIERIHRLHGATRYCGVPQLRSACQRAETLLKQNAPHTEEALNDLDKAIIRLEAEARVMA.

3 helical membrane passes run 9–25 (ASLM…WMQL), 84–101 (VLAH…IGSG), and 159–178 (LFAS…TLAV). Positions 182–234 (RTINGPMSQIKQAVSQLKDGNLETRLPPLGSRELDELASGINRMAATLQNAQE) constitute an HAMP domain. Residues 281–502 (NMSHEIRTPL…EFWISLKLPK (222 aa)) enclose the Histidine kinase domain. Phosphohistidine; by autocatalysis is present on His284. A Response regulatory domain is found at 658 to 777 (RVLCVDDNPA…QLAQVVLKWT (120 aa)). Asp707 is modified (4-aspartylphosphate). One can recognise an HPt domain in the interval 814–907 (KADLAADMLA…RLEAEARVMA (94 aa)). His853 bears the Phosphohistidine mark.

Post-translationally, activation requires a sequential transfer of a phosphate group from a His in the primary transmitter domain, to an Asp in the receiver domain and to a His in the secondary transmitter domain.

Its subcellular location is the cell inner membrane. The enzyme catalyses ATP + protein L-histidine = ADP + protein N-phospho-L-histidine.. In terms of biological role, forms part of a two-component regulatory system GacA/GacS(LemA). May be involved in lesion formation, swarming and in the production of extracellular protease, syringomycin and N-acyl-L-homoserine lactone (acyl-HSL). Required for pathogenicity on bean. This is Sensor protein GacS (gacS) from Pseudomonas syringae pv. syringae.